Consider the following 551-residue polypeptide: HTH-type transcriptional regulator SgrR (551 aa).

Residues Met-1 to Arg-116 form the HTH marR-type domain. A DNA-binding region (H-T-H motif) is located at residues Leu-26–Asp-49. Residues Glu-163–Trp-492 form a solute-binding region.

Its function is as follows. Activates the small RNA gene sgrS under glucose-phosphate stress conditions as well as yfdZ. Represses its own transcription under both stress and non-stress conditions. Might act as a sensor of the intracellular accumulation of phosphoglucose by binding these molecules in its C-terminal solute-binding domain. This Shigella boydii serotype 4 (strain Sb227) protein is HTH-type transcriptional regulator SgrR.